Consider the following 430-residue polypeptide: Adenylosuccinate synthetase (430 aa).

Residues 12–18 (GDEGKGK) and 40–42 (GHT) contribute to the GTP site. D13 acts as the Proton acceptor in catalysis. 2 residues coordinate Mg(2+): D13 and G40. IMP is bound by residues 13-16 (DEGK), 38-41 (NAGH), T128, R142, Q223, T238, and R302. H41 functions as the Proton donor in the catalytic mechanism. 298–304 (TTTGRPR) serves as a coordination point for substrate. GTP contacts are provided by residues R304, 330 to 332 (SID), and 412 to 414 (SVG).

This sequence belongs to the adenylosuccinate synthetase family. In terms of assembly, homodimer. Requires Mg(2+) as cofactor.

Its subcellular location is the cytoplasm. The enzyme catalyses IMP + L-aspartate + GTP = N(6)-(1,2-dicarboxyethyl)-AMP + GDP + phosphate + 2 H(+). Its pathway is purine metabolism; AMP biosynthesis via de novo pathway; AMP from IMP: step 1/2. In terms of biological role, plays an important role in the de novo pathway of purine nucleotide biosynthesis. Catalyzes the first committed step in the biosynthesis of AMP from IMP. The sequence is that of Adenylosuccinate synthetase from Streptococcus pyogenes serotype M3 (strain ATCC BAA-595 / MGAS315).